Reading from the N-terminus, the 123-residue chain is Signal recognition particle 14 kDa protein (123 aa).

The tract at residues 99-123 is disordered; it reads KKKPTPTTTPSSSTTAKTAAKKTKV. The segment covering 103–116 has biased composition (low complexity); the sequence is TPTTTPSSSTTAKT.

The protein belongs to the SRP14 family. Heterodimer with srp9; binds RNA as heterodimer. Component of a signal recognition particle (SRP) complex that consists of a 7SL RNA molecule and six protein subunits: srp72, srp68, srp54, srp19, srp14 and srp9.

The protein resides in the cytoplasm. Its function is as follows. Component of the signal recognition particle (SRP) complex, a ribonucleoprotein complex that mediates the cotranslational targeting of secretory and membrane proteins to the endoplasmic reticulum (ER). Srp9 together with srp14 and the Alu portion of the SRP RNA, constitutes the elongation arrest domain of SRP. The complex of srp9 and srp14 is required for SRP RNA binding. The sequence is that of Signal recognition particle 14 kDa protein (srp14-1) from Dictyostelium discoideum (Social amoeba).